Consider the following 362-residue polypeptide: MDKVMAQLEGLVAHYEELQEMMADPEVINDTKRYMEISKEEADLREVVQKYKKYKEDKKEIADNKEIIANETDSDLIEMAKEENAEIEKEIPELEDQIKILMLPKDPNDDKDIIMEIRGAAGGDEASLFAGDLLRMYEKYAERQNWKVSMIDSEPTEVGGYKRVAIMITGDKVYSKLKYENGAHRVQRIPVTESQGRVHTSTATVAVMPEYEQVDIDIDPKDIRVDVYRSSGAGGQHINKTSSAVRMTHLPTGIVVAMQDQRSQQQNREKAMQILKSRVYDYYESQNQAKYDAKRKNAIGTGDRSERIRTYNYPQNRVTDHRIGLTINKLDRVMNGELDEIIDALILYNQTKQLEELADQNA.

Residue glutamine 236 is modified to N5-methylglutamine.

It belongs to the prokaryotic/mitochondrial release factor family. Post-translationally, methylated by PrmC. Methylation increases the termination efficiency of RF1.

It is found in the cytoplasm. Functionally, peptide chain release factor 1 directs the termination of translation in response to the peptide chain termination codons UAG and UAA. The chain is Peptide chain release factor 1 from Lactobacillus helveticus (strain DPC 4571).